Reading from the N-terminus, the 155-residue chain is RNA pyrophosphohydrolase (155 aa).

The 143-residue stretch at 5–147 folds into the Nudix hydrolase domain; sequence KYRPNVAAII…KRQVYRQVIA (143 aa). Residues 42 to 63 carry the Nudix box motif; sequence GGIDEGETPLEALYRELLEEIG.

The protein belongs to the Nudix hydrolase family. RppH subfamily. The cofactor is a divalent metal cation.

Functionally, accelerates the degradation of transcripts by removing pyrophosphate from the 5'-end of triphosphorylated RNA, leading to a more labile monophosphorylated state that can stimulate subsequent ribonuclease cleavage. The protein is RNA pyrophosphohydrolase of Helicobacter pylori (strain P12).